The sequence spans 3527 residues: BEACH domain-containing protein A2 (3527 aa).

Disordered regions lie at residues 25 to 46 (AGEAISDPTTPPSSSQASPSSS), 385 to 423 (SSPHKNRGSNDSKKQPPLSLKTRQNDDSEKQQSLSLNSR), and 454 to 490 (ESSGTSTSLLSQTKLTGYSRRQTPSANNRYDEPCEQG). Positions 28–46 (AISDPTTPPSSSQASPSSS) are enriched in low complexity. Low complexity predominate over residues 455-469 (SSGTSTSLLSQTKLT). The segment covering 472–481 (SRRQTPSANN) has biased composition (polar residues). 5 LRR repeats span residues 1447-1470 (KLESGQTTISMSPTEIIPENNYED), 1499-1522 (FSHLSELEMGDNPVETSNCIVLSN), 1542-1565 (SIQIASLGFLENLISILWYRSHNL), 1566-1588 (AILRQINLVKHLLVTLQRGDVEV), and 2001-2024 (SSEMKSLDLTGSSSQVQPIDSRSS). 2 disordered regions span residues 1992-2023 (GDHVGSVSASSEMKSLDLTGSSSQVQPIDSRS) and 2046-2081 (IPSPSKSSTISTPHPSHISVSEFDASSDQSSGSQGS). The span at 1998-2020 (VSASSEMKSLDLTGSSSQVQPID) shows a compositional bias: polar residues. LRR repeat units follow at residues 2128 to 2151 (TEQIKAVQALESILEMLPLYVDPE), 2221 to 2247 (LLSILQLANKDGRVEEVTSSGKGLLSI), and 2313 to 2336 (VSAVLQLLVANKNIILCPSNLDTD). The tract at residues 2658-2680 (VNTDEKSETGSPIKSSSGKMDEI) is disordered. The span at 2666 to 2675 (TGSPIKSSSG) shows a compositional bias: polar residues. The BEACH-type PH domain maps to 2704–2871 (EHLEKIRFRY…EREEVFRNLL (168 aa)). Residues 2896 to 3188 (GSRLFKLMAK…QLFQKPHVKR (293 aa)) enclose the BEACH domain. 4 WD repeats span residues 3272-3311 (HEGNQIQCAGVSHDGRIVVTGAEDGLVSVWRVSKDGPRGS), 3322-3361 (AHTAKVICLRVSQPYMMIASSSDDCTVIIWDLSSLSFVRQ), 3410-3451 (DLIV…DPVS), and 3483-3522 (FHKQPVTSLHLTTDLKQLLSGDSAGHLLSWTVPDEILKAS).

This Arabidopsis thaliana (Mouse-ear cress) protein is BEACH domain-containing protein A2.